The sequence spans 250 residues: Accessory gland-specific peptide 26Aa (250 aa).

Residues 1-18 form the signal peptide; it reads MNQILLCSQILLLFFTVA. Residues 79–100 form a disordered region; sequence DYPINNSKSRKNSSTLPSPILT. Positions 82–95 are enriched in polar residues; it reads INNSKSRKNSSTLP. N-linked (GlcNAc...) asparagine glycans are attached at residues Asn83, Asn90, and Asn131. Disordered regions lie at residues 172-191 and 230-250; these read NVQN…SKDI and NNPA…PSTT. Residues 178–187 are compositionally biased toward basic residues; sequence KSTKSCKKRP. A compositionally biased stretch (polar residues) spans 240 to 250; that stretch reads KSPSEGNPSTT.

Proteolytically cleaved as it is secreted and in the recipient female. As to expression, main cells of the accessory glands of males.

It is found in the secreted. The protein localises to the extracellular space. In terms of biological role, this protein is transferred from male to female's hemolymph during mating, affecting egglaying and behavior after mating. This chain is Accessory gland-specific peptide 26Aa (Acp26Aa), found in Drosophila mauritiana (Fruit fly).